A 203-amino-acid polypeptide reads, in one-letter code: Small ribosomal subunit protein uS4 (203 aa).

Residues 20-44 (LPGLTRKRPKNTNPPGMHGAERKKK) form a disordered region. Residues 92 to 155 (MRLDCIVFRL…SSRKLVAAYA (64 aa)) form the S4 RNA-binding domain.

This sequence belongs to the universal ribosomal protein uS4 family. As to quaternary structure, part of the 30S ribosomal subunit. Contacts protein S5. The interaction surface between S4 and S5 is involved in control of translational fidelity.

Its function is as follows. One of the primary rRNA binding proteins, it binds directly to 16S rRNA where it nucleates assembly of the body of the 30S subunit. Functionally, with S5 and S12 plays an important role in translational accuracy. The polypeptide is Small ribosomal subunit protein uS4 (Synechococcus sp. (strain JA-2-3B'a(2-13)) (Cyanobacteria bacterium Yellowstone B-Prime)).